A 275-amino-acid chain; its full sequence is Putative hydroxypyruvate isomerase (275 aa).

Residues E147 and E246 each act as proton donor/acceptor in the active site.

This sequence belongs to the hyi family.

The enzyme catalyses 3-hydroxypyruvate = 2-hydroxy-3-oxopropanoate. In terms of biological role, catalyzes the reversible isomerization between hydroxypyruvate and 2-hydroxy-3-oxopropanoate (also termed tartronate semialdehyde). This Xenopus laevis (African clawed frog) protein is Putative hydroxypyruvate isomerase (hyi).